Here is a 354-residue protein sequence, read N- to C-terminus: D-alanine--D-alanine ligase (354 aa).

The ATP-grasp domain occupies 154-348 (RSWFLTNNIN…FTNLIEEIIK (195 aa)). Residue 181–232 (MKRPYVIKPITQGSSIGIEVIFEEDDFNFANYDFPYGDQVIIEKYIKGRELQ) participates in ATP binding. Positions 301, 315, and 317 each coordinate Mg(2+).

This sequence belongs to the D-alanine--D-alanine ligase family. The cofactor is Mg(2+). Mn(2+) serves as cofactor.

Its subcellular location is the cytoplasm. The enzyme catalyses 2 D-alanine + ATP = D-alanyl-D-alanine + ADP + phosphate + H(+). Its pathway is cell wall biogenesis; peptidoglycan biosynthesis. In terms of biological role, cell wall formation. In Rickettsia canadensis (strain McKiel), this protein is D-alanine--D-alanine ligase.